We begin with the raw amino-acid sequence, 79 residues long: ATP synthase subunit c (79 aa).

The next 2 helical transmembrane spans lie at 11 to 31 (ISAAIIMGFASIGAAIGIGIL) and 55 to 75 (IVMGLVDAIPMISVGLGLYLI).

This sequence belongs to the ATPase C chain family. F-type ATPases have 2 components, F(1) - the catalytic core - and F(0) - the membrane proton channel. F(1) has five subunits: alpha(3), beta(3), gamma(1), delta(1), epsilon(1). F(0) has three main subunits: a(1), b(2) and c(10-14). The alpha and beta chains form an alternating ring which encloses part of the gamma chain. F(1) is attached to F(0) by a central stalk formed by the gamma and epsilon chains, while a peripheral stalk is formed by the delta and b chains.

The protein localises to the cell membrane. In terms of biological role, f(1)F(0) ATP synthase produces ATP from ADP in the presence of a proton or sodium gradient. F-type ATPases consist of two structural domains, F(1) containing the extramembraneous catalytic core and F(0) containing the membrane proton channel, linked together by a central stalk and a peripheral stalk. During catalysis, ATP synthesis in the catalytic domain of F(1) is coupled via a rotary mechanism of the central stalk subunits to proton translocation. Functionally, key component of the F(0) channel; it plays a direct role in translocation across the membrane. A homomeric c-ring of between 10-14 subunits forms the central stalk rotor element with the F(1) delta and epsilon subunits. This chain is ATP synthase subunit c, found in Wigglesworthia glossinidia brevipalpis.